The sequence spans 95 residues: uncharacterized protein (95 aa).

Positions 1-19 are cleaved as a signal peptide; it reads MAILMLSLQLILLLIPSIS. N-linked (GlcNAc...) asparagine glycans are attached at residues asparagine 38 and asparagine 41.

Its subcellular location is the secreted. This is an uncharacterized protein from Homo sapiens (Human).